Reading from the N-terminus, the 232-residue chain is Chaperone protein LpfB (232 aa).

Residues 1-23 (MNRSRLISCTALVLALIAQNSFA) form the signal peptide.

This sequence belongs to the periplasmic pilus chaperone family.

It localises to the periplasm. Required for the biogenesis of long polar fimbria; binds and interact with LpfA. The sequence is that of Chaperone protein LpfB (lpfB) from Salmonella typhimurium (strain LT2 / SGSC1412 / ATCC 700720).